An 82-amino-acid chain; its full sequence is Small ribosomal subunit protein uS17c (82 aa).

It belongs to the universal ribosomal protein uS17 family. As to quaternary structure, part of the 30S ribosomal subunit.

Its subcellular location is the plastid. It is found in the chloroplast. In terms of biological role, one of the primary rRNA binding proteins, it binds specifically to the 5'-end of 16S ribosomal RNA. This chain is Small ribosomal subunit protein uS17c (rps17), found in Emiliania huxleyi (Coccolithophore).